Consider the following 435-residue polypeptide: UPF0597 protein AHA_4077 (435 aa).

The protein belongs to the UPF0597 family.

The chain is UPF0597 protein AHA_4077 from Aeromonas hydrophila subsp. hydrophila (strain ATCC 7966 / DSM 30187 / BCRC 13018 / CCUG 14551 / JCM 1027 / KCTC 2358 / NCIMB 9240 / NCTC 8049).